The primary structure comprises 98 residues: NADH-ubiquinone oxidoreductase chain 4L (98 aa).

3 consecutive transmembrane segments (helical) span residues 1–21, 29–49, and 61–81; these read MSLVYMNIMTAFMVSLAGLLM, SLLCLEGMMLSLFVMATLTIL, and IILLVFAACEAALGLSLLVMV.

The protein belongs to the complex I subunit 4L family. In terms of assembly, core subunit of respiratory chain NADH dehydrogenase (Complex I) which is composed of 45 different subunits.

It localises to the mitochondrion inner membrane. The enzyme catalyses a ubiquinone + NADH + 5 H(+)(in) = a ubiquinol + NAD(+) + 4 H(+)(out). In terms of biological role, core subunit of the mitochondrial membrane respiratory chain NADH dehydrogenase (Complex I) which catalyzes electron transfer from NADH through the respiratory chain, using ubiquinone as an electron acceptor. Part of the enzyme membrane arm which is embedded in the lipid bilayer and involved in proton translocation. This chain is NADH-ubiquinone oxidoreductase chain 4L (MT-ND4L), found in Rangifer tarandus (Reindeer).